The primary structure comprises 499 residues: MKEFQVYLELDRSLQHDFLYPLIFREYIYALAYDHGLNSSILVENLGYDNKSSLLIVKRLITRMYQQNHLILSANDSNKNQFWGYNKNLYSQIISEGFAVSVEIPFSLQLISSLEEAEIVKSYNLRSIHSIFPFFEEKFPYLNYVSDVRIPYPIHLEILVQTLRYWVKDASSFHLLRLFLYEYCNWNSLITPKKWISTFSKSNPRLFLFLYNFYVCEYESILIFLRNKSSYLRLTSSGVLFERIYFYAKIEHRVEVFDKDFPSTLWFFKDPFIHYVRYQGKSILSSRNTPFFMNKWKYYLIHLWQCHFYVWSQPGKIHINQLSEHSFYFLGYFSNVRLNPSVVRSQMLENSFIIENVMKKLDTTIPIIPLIRSLAKAKFCNVLGHPISKPVWADSSDFDIIDRFLRICRNLSHYYNGSSNKKSLYRIKYILRLSCIKTLARKHKSTVRVFLKRLGSKFLEEFFTEEEEILSLILPRASFTLQRLYRGRIWYLDIFYFHH.

Belongs to the intron maturase 2 family. MatK subfamily.

It is found in the plastid. Its subcellular location is the chloroplast. In terms of biological role, usually encoded in the trnK tRNA gene intron. Probably assists in splicing its own and other chloroplast group II introns. In Gleditsia triacanthos (Common honey-locust), this protein is Maturase K.